The sequence spans 223 residues: Ribonuclease 3 (223 aa).

The 123-residue stretch at 3-125 (LERLQKKLGY…IIAAVYLDAG (123 aa)) folds into the RNase III domain. A Mg(2+)-binding site is contributed by E38. Residue D42 is part of the active site. Residues D111 and E114 each contribute to the Mg(2+) site. E114 is a catalytic residue. The DRBM domain occupies 152 to 222 (DPKTRLQEYL…ALQVIKVLGI (71 aa)).

Belongs to the ribonuclease III family. As to quaternary structure, homodimer. The cofactor is Mg(2+).

Its subcellular location is the cytoplasm. The catalysed reaction is Endonucleolytic cleavage to 5'-phosphomonoester.. Functionally, digests double-stranded RNA. Involved in the processing of primary rRNA transcript to yield the immediate precursors to the large and small rRNAs (23S and 16S). Processes some mRNAs, and tRNAs when they are encoded in the rRNA operon. Processes pre-crRNA and tracrRNA of type II CRISPR loci if present in the organism. This Glaesserella parasuis serovar 5 (strain SH0165) (Haemophilus parasuis) protein is Ribonuclease 3.